We begin with the raw amino-acid sequence, 509 residues long: Heat shock 70 kDa protein 14 (509 aa).

This sequence belongs to the heat shock protein 70 family. As to quaternary structure, component of ribosome-associated complex (RAC), a heterodimer composed of Hsp70/DnaK-type chaperone HSPA14 and Hsp40/DnaJ-type chaperone DNAJC2.

The protein localises to the cytoplasm. The protein resides in the cytosol. Component of the ribosome-associated complex (RAC), a complex involved in folding or maintaining nascent polypeptides in a folding-competent state. In the RAC complex, binds to the nascent polypeptide chain, while DNAJC2 stimulates its ATPase activity. This Homo sapiens (Human) protein is Heat shock 70 kDa protein 14 (HSPA14).